A 138-amino-acid chain; its full sequence is Small ribosomal subunit protein uS8c (138 aa).

The protein belongs to the universal ribosomal protein uS8 family. Part of the 30S ribosomal subunit.

The protein localises to the plastid. Its subcellular location is the chloroplast. Functionally, one of the primary rRNA binding proteins, it binds directly to 16S rRNA central domain where it helps coordinate assembly of the platform of the 30S subunit. The chain is Small ribosomal subunit protein uS8c (rps8) from Chlorella vulgaris (Green alga).